The following is a 469-amino-acid chain: Keratin, type I cytoskeletal 16 (469 aa).

The interval 1–20 (MATCSRQFTSSSSMKGSCGI) is disordered. The tract at residues 1-112 (MATCSRQFTS…GIGDGLLVGS (112 aa)) is head. A coil 1A region spans residues 113–148 (EKVTMQNLNDRLATYLDKVRALEEANRDLEVKIRDW). The region spanning 113 to 424 (EKVTMQNLND…RLLDGENIHS (312 aa)) is the IF rod domain. The linker 1 stretch occupies residues 149–166 (YQRQRPTEIKDYSPYFKT). Residues 167–258 (IEDLKSKIII…KNHEEEMLAL (92 aa)) form a coil 1B region. The segment at 259–281 (RGQTGGDVNVEMDAAPGVDLSRI) is linker 12. Residues 282-420 (LNEMRDQYEQ…ATYRRLLDGE (139 aa)) form a coil 2 region. Residues 421–469 (NIHSSSQHSSGQSYSSREVFSSSSRQPRSILKEQGSTSFSQSQSQSSRD) form a tail region. A disordered region spans residues 422-469 (IHSSSQHSSGQSYSSREVFSSSSRQPRSILKEQGSTSFSQSQSQSSRD). Low complexity-rich tracts occupy residues 423 to 444 (HSSS…SSSS) and 454 to 469 (QGST…SSRD).

Belongs to the intermediate filament family. As to quaternary structure, heterodimer of a type I and a type II keratin. KRT16 associates with KRT6 isomers (KRT6A or KRT6B). Interacts with TCHP. Interacts with TRADD. As to expression, expressed in the epithelia of the tongue, upper and lower palate, footpad, proximal nail fold and nail bed, penile spine, sweat gland ducts, and back epidermis (at protein level). Expressed in upper suprabasal layers of the corneal epithelium (at protein level). Expressed in internal stratified epithelia in the esophagus and vagina (at protein level). Expressed in transitional stratified squamous epithelia in the forestomach, anal canal, and nasal cavity (at protein level). Expressed in transitional epithelia of the ureter, bladder and urethra (at protein level). In mature hair follicles, expressed in the companion layer of the outer root sheath during anagen and in the club hair sheath during catagen and telogen (at protein level).

Epidermis-specific type I keratin that plays a key role in skin. Acts as a regulator of innate immunity in response to skin barrier breach: required for some inflammatory checkpoint for the skin barrier maintenance. The chain is Keratin, type I cytoskeletal 16 (Krt16) from Mus musculus (Mouse).